Reading from the N-terminus, the 227-residue chain is Phosphoribosylformylglycinamidine synthase subunit PurQ (227 aa).

One can recognise a Glutamine amidotransferase type-1 domain in the interval 3 to 225 (FAVIVFPGSN…VKQGAHHVKT (223 aa)). The active-site Nucleophile is the Cys86. Residues His194 and Glu196 contribute to the active site.

As to quaternary structure, part of the FGAM synthase complex composed of 1 PurL, 1 PurQ and 2 PurS subunits.

It is found in the cytoplasm. The enzyme catalyses N(2)-formyl-N(1)-(5-phospho-beta-D-ribosyl)glycinamide + L-glutamine + ATP + H2O = 2-formamido-N(1)-(5-O-phospho-beta-D-ribosyl)acetamidine + L-glutamate + ADP + phosphate + H(+). It catalyses the reaction L-glutamine + H2O = L-glutamate + NH4(+). Its pathway is purine metabolism; IMP biosynthesis via de novo pathway; 5-amino-1-(5-phospho-D-ribosyl)imidazole from N(2)-formyl-N(1)-(5-phospho-D-ribosyl)glycinamide: step 1/2. In terms of biological role, part of the phosphoribosylformylglycinamidine synthase complex involved in the purines biosynthetic pathway. Catalyzes the ATP-dependent conversion of formylglycinamide ribonucleotide (FGAR) and glutamine to yield formylglycinamidine ribonucleotide (FGAM) and glutamate. The FGAM synthase complex is composed of three subunits. PurQ produces an ammonia molecule by converting glutamine to glutamate. PurL transfers the ammonia molecule to FGAR to form FGAM in an ATP-dependent manner. PurS interacts with PurQ and PurL and is thought to assist in the transfer of the ammonia molecule from PurQ to PurL. The protein is Phosphoribosylformylglycinamidine synthase subunit PurQ of Exiguobacterium sibiricum (strain DSM 17290 / CCUG 55495 / CIP 109462 / JCM 13490 / 255-15).